Here is a 345-residue protein sequence, read N- to C-terminus: Cytoplasmic envelopment protein 2 (345 aa).

Positions 26 to 35 (KLVGKSRKHR) are nuclear localization signal 1. A nuclear export signal region spans residues 55 to 63 (CILCQLLLL). The tract at residues 90-94 (RRRRR) is nuclear localization signal 2.

This sequence belongs to the herpesviridae cytoplasmic envelopment protein 2 family. As to quaternary structure, interacts with cytoplasmic envelopment protein 3 and with the capsid. Interacts with host STING1; this interaction prevents viral DNA-triggered antiviral immune response.

The protein resides in the virion tegument. It is found in the host cytoplasm. It localises to the host nucleus. In terms of biological role, plays a critical role in cytoplasmic virus egress. Participates in the final step of tegumentation and envelope acquisition within the host cytoplasm by directly interacting with the capsid. Upon virion binding to target cell, a signaling cascade is triggered to disrupt the interaction with the capsid, thereby preparing capsid uncoating. Additionally, antagonizes the viral DNA-triggered antiviral immune response by targeting host STING1 and preventing its dimerization and trafficking. This chain is Cytoplasmic envelopment protein 2 (UL94), found in Human cytomegalovirus (strain AD169) (HHV-5).